A 95-amino-acid chain; its full sequence is Small ribosomal subunit protein bS16 (95 aa).

It belongs to the bacterial ribosomal protein bS16 family.

This Thermosipho melanesiensis (strain DSM 12029 / CIP 104789 / BI429) protein is Small ribosomal subunit protein bS16.